Consider the following 129-residue polypeptide: Ig kappa chain V-IV region S107B (129 aa).

Positions 1 to 22 (MDLQVQIIXFLLISVTVIMSRG) are cleaved as a signal peptide. Positions 23–45 (ENVLTQSPAIMAASLGQKVTMTC) are framework-1. The cysteines at positions 45 and 111 are disulfide-linked. Positions 46–57 (SASSSVSSSYLH) are complementarity-determining-1. Positions 58 to 72 (WYQQKSGASPKPLIH) are framework-2. A complementarity-determining-2 region spans residues 73–79 (RTSNLAS). Residues 80–111 (GVPARFSGSGSGTSYSLTISSVEAEDDATYYC) form a framework-3 region. Positions 112 to 118 (QQWSGYP) are complementarity-determining-3. A framework-4 region spans residues 119-128 (FGSGTKLEIK).

In Mus musculus (Mouse), this protein is Ig kappa chain V-IV region S107B.